The following is a 57-amino-acid chain: TICLLLFPLTVVPLDGDQPAHQPAVRKHNIKSAVQLRQWDEEQQCCTGQCHICWPCC.

An N-terminal signal peptide occupies residues 1 to 16; the sequence is TICLLLFPLTVVPLDG. The propeptide occupies 17 to 44; it reads DQPAHQPAVRKHNIKSAVQLRQWDEEQQ. Intrachain disulfides connect Cys-45/Cys-57, Cys-46/Cys-53, and Cys-50/Cys-56.

This sequence belongs to the conotoxin M superfamily. Expressed by the venom duct.

The protein resides in the secreted. The polypeptide is Conotoxin reg3.17 (Conus regius (Crown cone)).